We begin with the raw amino-acid sequence, 355 residues long: Protein RecA (355 aa).

ATP is bound at residue 67-74; that stretch reads GPESSGKT.

Belongs to the RecA family.

Its subcellular location is the cytoplasm. Functionally, can catalyze the hydrolysis of ATP in the presence of single-stranded DNA, the ATP-dependent uptake of single-stranded DNA by duplex DNA, and the ATP-dependent hybridization of homologous single-stranded DNAs. It interacts with LexA causing its activation and leading to its autocatalytic cleavage. The protein is Protein RecA of Shewanella amazonensis (strain ATCC BAA-1098 / SB2B).